Here is a 360-residue protein sequence, read N- to C-terminus: Nucleoporin SEH1-A (360 aa).

6 WD repeats span residues Asp10–Cys49, Thr55–Lys96, Asp111–Gln152, Ser160–Ala210, Ser217–Ser258, and Asn276–Cys315.

This sequence belongs to the WD repeat SEC13 family. Component of the Nup107-160 subcomplex of the nuclear pore complex (NPC). The Nup107-160 subcomplex includes NUP160, NUP133, NUP107, NUP98, NUP85, NUP43, NUP37, SEH1 and SEC13. Component of the GATOR2 subcomplex, composed of MIOS, SEC13, SEH1L, WDR24 and WDR59. The GATOR2 complex interacts with CASTOR1 and CASTOR2; the interaction is negatively regulated by arginine. The GATOR2 complex interacts with SESN1, SESN2 and SESN3; the interaction is negatively regulated by amino acids.

Its subcellular location is the chromosome. It is found in the centromere. The protein localises to the kinetochore. The protein resides in the nucleus. It localises to the nuclear pore complex. Its subcellular location is the lysosome membrane. With respect to regulation, the GATOR2 complex is negatively regulated by the upstream amino acid sensors CASTOR1 and SESN2, which sequester the GATOR2 complex in absence of amino acids. In the presence of abundant amino acids, GATOR2 is released from CASTOR1 and SESN2 and activated. Its function is as follows. Component of the Nup107-160 subcomplex of the nuclear pore complex (NPC). The Nup107-160 subcomplex is required for the assembly of a functional NPC. The Nup107-160 subcomplex is also required for normal kinetochore microtubule attachment, mitotic progression and chromosome segregation. This subunit plays a role in recruitment of the Nup107-160 subcomplex to the kinetochore. As a component of the GATOR2 complex, functions as an activator of the amino acid-sensing branch of the mTORC1 signaling pathway. The GATOR2 complex indirectly activates mTORC1 through the inhibition of the GATOR1 subcomplex. GATOR2 probably acts as an E3 ubiquitin-protein ligase toward GATOR1. In the presence of abundant amino acids, the GATOR2 complex mediates ubiquitination of the NPRL2 core component of the GATOR1 complex, leading to GATOR1 inactivation. In the absence of amino acids, GATOR2 is inhibited, activating the GATOR1 complex. The protein is Nucleoporin SEH1-A (seh1l-a) of Xenopus laevis (African clawed frog).